Reading from the N-terminus, the 211-residue chain is Mediator of RNA polymerase II transcription subunit 20 (211 aa).

The protein belongs to the Mediator complex subunit 20 family. Component of the Mediator complex.

Its subcellular location is the nucleus. Component of the Mediator complex, a coactivator involved in the regulated transcription of nearly all RNA polymerase II-dependent genes. Mediator functions as a bridge to convey information from gene-specific regulatory proteins to the basal RNA polymerase II transcription machinery. Mediator is recruited to promoters by direct interactions with regulatory proteins and serves as a scaffold for the assembly of a functional preinitiation complex with RNA polymerase II and the general transcription factors. This Kluyveromyces lactis (strain ATCC 8585 / CBS 2359 / DSM 70799 / NBRC 1267 / NRRL Y-1140 / WM37) (Yeast) protein is Mediator of RNA polymerase II transcription subunit 20 (SRB2).